Here is a 134-residue protein sequence, read N- to C-terminus: Probable 4-amino-4-deoxy-L-arabinose-phosphoundecaprenol flippase subunit ArnF (134 aa).

Residues 1-5 (MNRRR) are Cytoplasmic-facing. A helical membrane pass occupies residues 6–26 (GILFALASVLLVSVAQLSMRW). Topologically, residues 27-45 (SMTRLPRPDQWLSVPSVDS) are periplasmic. A helical membrane pass occupies residues 46–66 (VALAVVLAAIFAYALSMLCWL). At 67–77 (AALRDLPLGRA) the chain is on the cytoplasmic side. Residues 78-98 (YSLLSISYALVYLLAASLPLF) traverse the membrane as a helical segment. Residues 99 to 101 (NES) are Periplasmic-facing. Residues 102–122 (FSFSKSLGVALVMLGVITINT) form a helical membrane-spanning segment. Over 123-134 (RPARAPELRSSP) the chain is Cytoplasmic.

This sequence belongs to the ArnF family. In terms of assembly, heterodimer of ArnE and ArnF.

Its subcellular location is the cell inner membrane. It functions in the pathway bacterial outer membrane biogenesis; lipopolysaccharide biosynthesis. In terms of biological role, translocates 4-amino-4-deoxy-L-arabinose-phosphoundecaprenol (alpha-L-Ara4N-phosphoundecaprenol) from the cytoplasmic to the periplasmic side of the inner membrane. In Pseudomonas fluorescens (strain Pf0-1), this protein is Probable 4-amino-4-deoxy-L-arabinose-phosphoundecaprenol flippase subunit ArnF.